A 350-amino-acid chain; its full sequence is Galactokinase (350 aa).

14–17 (EHTD) contacts substrate. ATP-binding positions include S46 and 96 to 102 (GAGLSSS). 2 residues coordinate Mg(2+): S102 and E134. The active-site Proton acceptor is D146. Residue Y196 coordinates substrate.

It belongs to the GHMP kinase family. GalK subfamily.

The protein localises to the cytoplasm. It carries out the reaction alpha-D-galactose + ATP = alpha-D-galactose 1-phosphate + ADP + H(+). It functions in the pathway carbohydrate metabolism; galactose metabolism. Its function is as follows. Catalyzes the transfer of the gamma-phosphate of ATP to D-galactose to form alpha-D-galactose-1-phosphate (Gal-1-P). This chain is Galactokinase, found in Thermotoga petrophila (strain ATCC BAA-488 / DSM 13995 / JCM 10881 / RKU-1).